We begin with the raw amino-acid sequence, 132 residues long: Small ribosomal subunit protein uS8 (132 aa).

It belongs to the universal ribosomal protein uS8 family. Part of the 30S ribosomal subunit. Contacts proteins S5 and S12.

Functionally, one of the primary rRNA binding proteins, it binds directly to 16S rRNA central domain where it helps coordinate assembly of the platform of the 30S subunit. This Bacillus mycoides (strain KBAB4) (Bacillus weihenstephanensis) protein is Small ribosomal subunit protein uS8.